The following is a 314-amino-acid chain: Hydrolase 4 (314 aa).

Residues 73–75 (HGA) carry the Involved in the stabilization of the negatively charged intermediate by the formation of the oxyanion hole motif. Residues serine 165 and aspartate 260 contribute to the active site.

It belongs to the 'GDXG' lipolytic enzyme family.

Its pathway is alkaloid biosynthesis. In terms of biological role, component of the seco-iridoid and derivatives monoterpenoid indole alkaloids (MIAs, e.g. vincadifformine) biosynthesis pathway. Catalyzes the conversion of O-acetylstemmadenine (OAS) to vincadifformine. May also trigger the formation of additional unknown MIAs. In Catharanthus roseus (Madagascar periwinkle), this protein is Hydrolase 4.